The chain runs to 240 residues: Ubiquinone biosynthesis O-methyltransferase (240 aa).

Arg-44, Gly-64, Asp-85, and Met-129 together coordinate S-adenosyl-L-methionine.

It belongs to the methyltransferase superfamily. UbiG/COQ3 family.

The enzyme catalyses a 3-demethylubiquinol + S-adenosyl-L-methionine = a ubiquinol + S-adenosyl-L-homocysteine + H(+). It catalyses the reaction a 3-(all-trans-polyprenyl)benzene-1,2-diol + S-adenosyl-L-methionine = a 2-methoxy-6-(all-trans-polyprenyl)phenol + S-adenosyl-L-homocysteine + H(+). It participates in cofactor biosynthesis; ubiquinone biosynthesis. Its function is as follows. O-methyltransferase that catalyzes the 2 O-methylation steps in the ubiquinone biosynthetic pathway. The sequence is that of Ubiquinone biosynthesis O-methyltransferase from Escherichia coli (strain K12 / MC4100 / BW2952).